A 286-amino-acid polypeptide reads, in one-letter code: Beta-lactamase SHV-24 (286 aa).

Residues 1–21 (MRYIRLCIISLLATLPLAVHA) form the signal peptide. Ser66 acts as the Acyl-ester intermediate in catalysis. Residues Cys73 and Cys119 are joined by a disulfide bond. Glu164 (proton acceptor) is an active-site residue. 230 to 232 (KTG) contributes to the substrate binding site.

This sequence belongs to the class-A beta-lactamase family.

It catalyses the reaction a beta-lactam + H2O = a substituted beta-amino acid. Functionally, hydrolyzes ampicillin. Can also hydrolyze cephaloridine, aztreonam and ceftazidime with a low catalytic rate. In Escherichia coli, this protein is Beta-lactamase SHV-24 (bla).